A 206-amino-acid polypeptide reads, in one-letter code: Emopamil-binding protein-like (206 aa).

4 consecutive transmembrane segments (helical) span residues 10 to 30 (EAGGSLLLCAALLAAGCALGL), 42 to 62 (GALIWLCYDALVHFALEGPFV), 101 to 121 (VEILTVALDGSLALFLIYAIV), and 165 to 185 (CWLYLFFFNGVWVLIPGLLLW). One can recognise an EXPERA domain in the interval 39-184 (ADRGALIWLC…VWVLIPGLLL (146 aa)).

This sequence belongs to the EBP family. As to quaternary structure, homodimer. Widely expressed with highest levels in liver, lung and kidney.

The protein resides in the endoplasmic reticulum membrane. In terms of biological role, does not possess sterol isomerase activity and does not bind sigma ligands. The protein is Emopamil-binding protein-like (EBPL) of Homo sapiens (Human).